We begin with the raw amino-acid sequence, 563 residues long: Arginine--tRNA ligase (563 aa).

Positions 121–131 match the 'HIGH' region motif; that stretch reads PNIAKPFSIGH.

It belongs to the class-I aminoacyl-tRNA synthetase family. Monomer.

It is found in the cytoplasm. The catalysed reaction is tRNA(Arg) + L-arginine + ATP = L-arginyl-tRNA(Arg) + AMP + diphosphate. This Streptococcus pneumoniae (strain Hungary19A-6) protein is Arginine--tRNA ligase.